Reading from the N-terminus, the 310-residue chain is Dopamine receptor-interacting protein 1 (310 aa).

Interacts with DRD1.

Its function is as follows. Could be a regulator of the dopamine receptor signaling pathway. This chain is Dopamine receptor-interacting protein 1, found in Homo sapiens (Human).